The primary structure comprises 1073 residues: Collagen alpha-2(I) chain (1073 aa).

The interval 1–939 is disordered; that stretch reads APDPGPGPMG…PGPAGGGYDV (939 aa). Low complexity-rich tracts occupy residues 100 to 148, 178 to 187, and 194 to 215; these read EPGA…AAGP, EPGPNGAVGP, and PGNN…AGAP. Over residues 217-227 the composition is skewed to pro residues; it reads FPGPRGGPGPQ. Over residues 229 to 239 the composition is skewed to low complexity; the sequence is PQGAAGQRGLA. Residues 246–255 show a composition bias toward gly residues; the sequence is GVKGDGGPKG. Low complexity-rich tracts occupy residues 296–315, 321–348, 386–399, and 411–423; these read MPGA…PGDA, SGPA…AGPA, APGP…TGAT, and QGAA…QGLP. Residues 424–433 show a composition bias toward gly residues; the sequence is GPAGGAGEAG. Over residues 458-468 the composition is skewed to low complexity; the sequence is NPGAAGASGPQ. The span at 481-508 shows a compositional bias: gly residues; the sequence is GTDGGKGEPGAAGAAGGPGHQGPGGMPG. Residues 519-530 are compositionally biased toward basic and acidic residues; that stretch reads KGEKGEAGHRGP. Composition is skewed to low complexity over residues 561–575 and 584–597; these read SGSF…ARGA and PAGA…PGAD. Over residues 607–616 the composition is skewed to gly residues; the sequence is GPSGGKGESG. Low complexity-rich tracts occupy residues 617–642, 653–680, and 708–729; these read PAGP…TGAR, FPGA…PAGK, and SGEK…SGPL. Gly residues predominate over residues 745 to 757; sequence GSPGGAGGVGEPG. Over residues 758–774 the composition is skewed to low complexity; the sequence is RVGPAGPAGARGNLGLP. Gly residues predominate over residues 811–820; the sequence is GESGPGGAAG. Low complexity predominate over residues 821-836; it reads AVGPAGARGAAGPSGP. Basic and acidic residues predominate over residues 837–851; it reads RGEKGVAGEKGERGL. Composition is skewed to low complexity over residues 857–876 and 906–917; these read LQGM…AGPN and PGARGPPGYVGP. The span at 918–932 shows a compositional bias: pro residues; the sequence is AGPPGSPGLPGPPGP. The Fibrillar collagen NC1 domain maps to 1039–1073; the sequence is RTNKPSRLPLLDLAPLDLGGADQEFGLDLGPVCFK.

The protein belongs to the fibrillar collagen family.

It localises to the secreted. It is found in the extracellular space. The protein localises to the extracellular matrix. The polypeptide is Collagen alpha-2(I) chain (Epinephelus aeneus (White grouper)).